The following is a 104-amino-acid chain: Flagellar hook-basal body complex protein FliE (104 aa).

It belongs to the FliE family.

Its subcellular location is the bacterial flagellum basal body. This is Flagellar hook-basal body complex protein FliE from Enterobacter sp. (strain 638).